The chain runs to 98 residues: Cell division topological specificity factor (98 aa).

It belongs to the MinE family.

Its function is as follows. Prevents the cell division inhibition by proteins MinC and MinD at internal division sites while permitting inhibition at polar sites. This ensures cell division at the proper site by restricting the formation of a division septum at the midpoint of the long axis of the cell. The sequence is that of Cell division topological specificity factor from Moorella thermoacetica (strain ATCC 39073 / JCM 9320).